Here is a 164-residue protein sequence, read N- to C-terminus: Crossover junction endodeoxyribonuclease RuvC (164 aa).

Catalysis depends on residues aspartate 7, glutamate 67, and aspartate 140. Aspartate 7, glutamate 67, and aspartate 140 together coordinate Mg(2+).

This sequence belongs to the RuvC family. In terms of assembly, homodimer which binds Holliday junction (HJ) DNA. The HJ becomes 2-fold symmetrical on binding to RuvC with unstacked arms; it has a different conformation from HJ DNA in complex with RuvA. In the full resolvosome a probable DNA-RuvA(4)-RuvB(12)-RuvC(2) complex forms which resolves the HJ. It depends on Mg(2+) as a cofactor.

The protein localises to the cytoplasm. The catalysed reaction is Endonucleolytic cleavage at a junction such as a reciprocal single-stranded crossover between two homologous DNA duplexes (Holliday junction).. The RuvA-RuvB-RuvC complex processes Holliday junction (HJ) DNA during genetic recombination and DNA repair. Endonuclease that resolves HJ intermediates. Cleaves cruciform DNA by making single-stranded nicks across the HJ at symmetrical positions within the homologous arms, yielding a 5'-phosphate and a 3'-hydroxyl group; requires a central core of homology in the junction. The consensus cleavage sequence is 5'-(A/T)TT(C/G)-3'. Cleavage occurs on the 3'-side of the TT dinucleotide at the point of strand exchange. HJ branch migration catalyzed by RuvA-RuvB allows RuvC to scan DNA until it finds its consensus sequence, where it cleaves and resolves the cruciform DNA. The polypeptide is Crossover junction endodeoxyribonuclease RuvC (Pelotomaculum thermopropionicum (strain DSM 13744 / JCM 10971 / SI)).